The following is a 315-amino-acid chain: Kiwa protein KwaB (315 aa).

Functionally, component of antiviral defense system Kiwa, composed of KwaA and KwaB. Expression of Kiwa in E.coli (strain MG1655) confers resistance to phages lambda and SECphi18. This Escherichia coli O55:H7 (strain RM12579 / EPEC) protein is Kiwa protein KwaB.